A 188-amino-acid chain; its full sequence is C-type lectin domain family 5 member A (188 aa).

The Cytoplasmic segment spans residues 1 to 4 (MNWH). The helical; Signal-anchor for type II membrane protein transmembrane segment at 5 to 27 (MIISGLIVVVLKVVGMTLFLLYF) threads the bilayer. Over 28–188 (PQIFNKSNDG…YRRICEKNAK (161 aa)) the chain is Extracellular. An N-linked (GlcNAc...) asparagine glycan is attached at Asn-32. The cysteines at positions 71 and 82 are disulfide-linked. In terms of domain architecture, C-type lectin spans 78-184 (YQARCFFLST…CDISYRRICE (107 aa)). Residues Asn-93, Asn-144, and Asn-151 are each glycosylated (N-linked (GlcNAc...) asparagine). Disulfide bonds link Cys-99–Cys-183 and Cys-161–Cys-175.

Monomer. Homodimer. The majority of CLEC5A is expressed as a monomeric form on macrophages. Interacts with TYROBP/DAP12. The interaction with TYROBP is required for CLEC5A cell surface expression. Interacts with HCST/DAP10. Forms a CLEC5A/TYROBP/HCST trimolecular complex depending almost solely on TYROBP. In terms of assembly, (Microbial infection) Interacts with dengue virus envelope protein E. In terms of processing, N-glycosylated. Contains sialic acid residues. Highly expressed in bone marrow with lower levels in synovium, lung and bronchus. Expressed in peripheral blood monocytes and in the monocyte/macrophage cell lines U-937 and Mono-Mac-6, but not in cell lines of other origins. Expression is down-regulated when monocytes differentiate into dendritic cells.

It is found in the cell membrane. Functionally, functions as a positive regulator of osteoclastogenesis. Cell surface receptor that signals via TYROBP. Regulates inflammatory responses. In terms of biological role, (Microbial infection) Critical macrophage receptor for dengue virus serotypes 1-4. The binding of dengue virus to CLEC5A triggers signaling through the phosphorylation of TYROBP. This interaction does not result in viral entry, but stimulates pro-inflammatory cytokine release. The sequence is that of C-type lectin domain family 5 member A (CLEC5A) from Homo sapiens (Human).